The chain runs to 265 residues: uncharacterized protein (265 aa).

A helical; Signal-anchor for type II membrane protein membrane pass occupies residues 3–23; that stretch reads KKTWVYIIIAIIIILLLVWYF. Asn37 and Asn125 each carry an N-linked (GlcNAc...) asparagine; by host glycan. The stretch at 37–94 forms a coiled coil; the sequence is NQTYNMLQQQISSLNQQILFLKQQISNLHVPAPTSTVNSLRQTVSDINQQVSTINNQI. Residues 158 to 257 are a coiled coil; it reads NVADNELNVL…KNSLGSAVRN (100 aa).

The protein resides in the host membrane. It is found in the virion. This is an uncharacterized protein from Acanthamoeba polyphaga (Amoeba).